The sequence spans 285 residues: Sulfotransferase 2A2 (285 aa).

Residues Lys-44, Ser-45, Gly-46, Thr-47, Asn-48, and Trp-49 each coordinate 3'-phosphoadenylyl sulfate. The active-site Proton acceptor is the His-99. 8 residues coordinate 3'-phosphoadenylyl sulfate: Arg-121, Ser-129, Tyr-184, Ser-218, Met-223, Arg-247, Lys-248, and Gly-249.

It belongs to the sulfotransferase 1 family.

The protein resides in the cytoplasm. The catalysed reaction is an alcohol + 3'-phosphoadenylyl sulfate = an alkyl sulfate + adenosine 3',5'-bisphosphate + H(+). Its function is as follows. Sulfotransferase that utilizes 3'-phospho-5'-adenylyl sulfate (PAPS) as sulfonate donor to catalyze the sulfate conjugation of a potential wide variety of acceptor molecules bearing a hydroxyl group. Sulfonation increases the water solubility of most compounds, and therefore their renal excretion, but it can also result in bioactivation to form active metabolites. The chain is Sulfotransferase 2A2 from Mus musculus (Mouse).